A 445-amino-acid polypeptide reads, in one-letter code: Cyclic GMP-AMP phosphodiesterase SMPDL3A (445 aa).

Positions 1–22 (MALPGNFLCCLLVAWLCDPGLG) are cleaved as a signal peptide. Aspartate 42 and histidine 44 together coordinate Zn(2+). Residues cysteine 59 and cysteine 78 are joined by a disulfide bond. Residue asparagine 66 is glycosylated (N-linked (GlcNAc...) asparagine). Aspartate 107 contributes to the Zn(2+) binding site. Histidine 111 contacts ATP. The N-linked (GlcNAc...) asparagine glycan is linked to asparagine 128. Zn(2+) is bound at residue asparagine 148. Residues asparagine 148 and histidine 149 each contribute to the ATP site. N-linked (GlcNAc...) asparagine glycosylation is found at asparagine 219 and asparagine 235. The Zn(2+) site is built by histidine 249, histidine 290, and histidine 292. Residues asparagine 353 and asparagine 364 are each glycosylated (N-linked (GlcNAc...) asparagine). Cystine bridges form between cysteine 417-cysteine 421 and cysteine 427-cysteine 440.

The protein belongs to the acid sphingomyelinase family. As to quaternary structure, monomer. Homodimer; homodimerizes following 2',3'-cGAMP-binding. The cofactor is Zn(2+).

It localises to the secreted. It catalyses the reaction 2',3'-cGAMP + H2O = 5'-pGpA(2'-5') + H(+). It carries out the reaction 5'-pGpA(2'-5') + H2O = 5'-GpA(2'-5') + phosphate. The catalysed reaction is a ribonucleoside 5'-triphosphate + H2O = a ribonucleoside 5'-diphosphate + phosphate + H(+). The enzyme catalyses ATP + H2O = ADP + phosphate + H(+). In terms of biological role, cyclic-nucleotide phosphodiesterase that acts as a negative regulator of innate immunity by mediating degradation of 2',3'-cGAMP, thereby inhibiting the cGAS-STING signaling. Specifically linearizes 2',3'-cGAMP into 2'5'-bond pGpA and further hydrolyzes pGpA to produce GpA. Also has in vitro nucleotide phosphodiesterase activity with nucleoside triphosphates, such as ATP. Has in vitro activity with p-nitrophenyl-TMP. Has lower activity with nucleoside diphosphates, and no activity with nucleoside monophosphates. Has in vitro activity with CDP-choline, giving rise to CMP and phosphocholine. Has in vitro activity with CDP-ethanolamine. Does not have sphingomyelin phosphodiesterase activity. In Rattus norvegicus (Rat), this protein is Cyclic GMP-AMP phosphodiesterase SMPDL3A (Smpdl3a).